The primary structure comprises 407 residues: MDWDNIFSYNTAKIVTIKDRRLGGLHIIFMVLIIVYIVIYSTIYKKGYLLTETPVGSIRASLLAPNEFKDDSNFKYCDDNLIEYNFTKLECDYYDEAFVSFPVGDDVSFAVTTRVKTLDQVLNCSSKNPKCKYTTVSTRNVYVSDIEDFTILIDHTMFAPSSLIQYNSKQLKGYILDNDNNEIQINETINTVGIPGKPDILTIGKLLQLANIDLDGASSVNSTNSVRYDGVVALVFITYSNTFSYNTNNFKYVYSIQKVEDTEYGVPEAVILDNVSSRMYYNRHGIRLIFIQNGEIGSFNFQALLLTFVSGLGLLAISTVLVDQLAIRFLPERKTYSSHKFQITHGFSESRNKLRISQNEKDPLLLVETTKNNENNNNNDDYNDDDNEIFDDNNNGYQNIQNNNIIL.

The Cytoplasmic segment spans residues 1 to 22; it reads MDWDNIFSYNTAKIVTIKDRRL. The chain crosses the membrane as a helical span at residues 23–43; sequence GGLHIIFMVLIIVYIVIYSTI. At 44–300 the chain is on the lumenal side; it reads YKKGYLLTET…IQNGEIGSFN (257 aa). The pore-forming motif stretch occupies residues 283–296; sequence RHGIRLIFIQNGEI. The chain crosses the membrane as a helical span at residues 301–321; the sequence is FQALLLTFVSGLGLLAISTVL. Residues 322–407 lie on the Cytoplasmic side of the membrane; the sequence is VDQLAIRFLP…QNIQNNNIIL (86 aa). The tract at residues 371-394 is disordered; the sequence is KNNENNNNNDDYNDDDNEIFDDNN. The segment covering 381–391 has biased composition (acidic residues); it reads DYNDDDNEIFD.

This sequence belongs to the P2X receptor family.

It localises to the contractile vacuole membrane. Its function is as follows. P2X receptors are ligand-gated ion channels that play a role in intracellular calcium signaling. ATP does not evoke inward currents in p2xD. Not essential for osmoregulation. This Dictyostelium discoideum (Social amoeba) protein is P2X receptor D (p2xD).